A 460-amino-acid chain; its full sequence is tRNA modification GTPase MnmE (460 aa).

R22, E87, and R126 together coordinate (6S)-5-formyl-5,6,7,8-tetrahydrofolate. Residues 222–381 (GLKTAIIGKP…LENTIYNLVF (160 aa)) enclose the TrmE-type G domain. N232 contacts K(+). GTP contacts are provided by residues 232-237 (NVGKSS), 251-257 (TDIPGTT), and 276-279 (DTAG). Residue S236 participates in Mg(2+) binding. T251, I253, and T256 together coordinate K(+). T257 is a binding site for Mg(2+). K460 lines the (6S)-5-formyl-5,6,7,8-tetrahydrofolate pocket.

It belongs to the TRAFAC class TrmE-Era-EngA-EngB-Septin-like GTPase superfamily. TrmE GTPase family. In terms of assembly, homodimer. Heterotetramer of two MnmE and two MnmG subunits. K(+) serves as cofactor.

The protein localises to the cytoplasm. In terms of biological role, exhibits a very high intrinsic GTPase hydrolysis rate. Involved in the addition of a carboxymethylaminomethyl (cmnm) group at the wobble position (U34) of certain tRNAs, forming tRNA-cmnm(5)s(2)U34. This is tRNA modification GTPase MnmE from Thermoanaerobacter sp. (strain X514).